The chain runs to 374 residues: Glutamate 5-kinase (374 aa).

Residue K16 coordinates ATP. Substrate contacts are provided by S56, D143, and N155. Residues 175 to 176 and 217 to 223 contribute to the ATP site; these read TD and SGGMLTK. The region spanning 282-360 is the PUA domain; it reads RGALILDDGA…SNIGAILGYK (79 aa).

It belongs to the glutamate 5-kinase family.

It localises to the cytoplasm. The enzyme catalyses L-glutamate + ATP = L-glutamyl 5-phosphate + ADP. It functions in the pathway amino-acid biosynthesis; L-proline biosynthesis; L-glutamate 5-semialdehyde from L-glutamate: step 1/2. Catalyzes the transfer of a phosphate group to glutamate to form L-glutamate 5-phosphate. The sequence is that of Glutamate 5-kinase from Marinomonas sp. (strain MWYL1).